Consider the following 205-residue polypeptide: MGSSEQELVAIVRELGCGPYFLGTFDKRFPGFMAPHKLACAIVNTAGRETGGVHWLALAWNPKNRTCYLFDPFGFSDERLKQIYQFEYEGLLKRSALASTPDHCITLIKSTQTVQGPFSAACGLFCCMFLHAFVNWPTSPMERNPTMDLLTGVPNSMLQSPQVVPTLRHNQERLYRFLAQRSPYFQRHCERIKKATAFDQMKNNM.

Residues His-54, Asp-71, and Cys-122 contribute to the active site.

The protein belongs to the peptidase C5 family. Interacts with protease cofactor pVI-C; this interaction is necessary for protease activation.

It is found in the virion. The protein localises to the host nucleus. It carries out the reaction Cleaves proteins of the adenovirus and its host cell at two consensus sites: -Yaa-Xaa-Gly-Gly-|-Xaa- and -Yaa-Xaa-Gly-Xaa-|-Gly- (in which Yaa is Met, Ile or Leu, and Xaa is any amino acid).. Requires DNA and protease cofactor for maximal activation. Inside nascent virions, becomes partially activated by binding to the viral DNA, allowing it to cleave the cofactor that binds to the protease and fully activates it. Actin, like the viral protease cofactor, seems to act as a cofactor in the cleavage of cytokeratin 18 and of actin itself. Functionally, cleaves viral precursor proteins (pTP, pIIIa, pVI, pVII, pVIII, and pX) inside newly assembled particles giving rise to mature virions. Protease complexed to its cofactor slides along the viral DNA to specifically locate and cleave the viral precursors. Mature virions have a weakened organization compared to the unmature virions, thereby facilitating subsequent uncoating. Without maturation, the particle lacks infectivity and is unable to uncoat. Late in adenovirus infection, in the cytoplasm, may participate in the cytoskeleton destruction. Cleaves host cell cytoskeletal keratins K7 and K18. This Homo sapiens (Human) protein is Protease.